Reading from the N-terminus, the 535-residue chain is MSLSRSEEMHRLTENVYKTIMEQFNPSLRNFIAMGKNYEKALAGVTFAAKGYFDALVKMGELASESQGSKELGDVLFQMAEVHRQIQNQLEEMLKAFHNELLTQLEQKVELDSRYLSAALKKYQTEQRSKGDALDKCQAELKKLRKKSQGSKNPQKYSDKELQYIDAISNKQGELENYVSDGYKTALTEERRRFCFLVEKQCAVAKNSAAYHSKGKELLAQKLPLWQQACADPNKIPDRAAQLMQQMANSNGSILPSALSASKSNLVISDPIPGAKPLPVPPELAPFVGRMSAQENVPVMNGVAGADSEDYNPWADRKAAQPKSLSPPQSQSKLSDSYSNTLPVRKSVTPKNSYATTENKTLPRSSSMAAGLERNGRMRVKAIFSHAAGDNSTLLSFKEGDLITLLVPEARDGWHYGESEKTKMRGWFPFSYTRVLDSDGSDRLHMSLQQGKSSSTGNLLDKDDLALPPPDYGTSSRAFPSQTAGTFKQRPYSVAVPAFSQGLDDYGARSVSRNPFANVHLKPTVTNDRSAPLLS.

One can recognise an IMD domain in the interval 1–250 (MSLSRSEEMH…AQLMQQMANS (250 aa)). Residues 1 to 251 (MSLSRSEEMH…QLMQQMANSN (251 aa)) are a coiled coil. Phosphoserine occurs at positions 262, 324, 326, and 337. The interval 308–370 (SEDYNPWADR…TLPRSSSMAA (63 aa)) is disordered. Positions 321–335 (QPKSLSPPQSQSKLS) are enriched in low complexity. Phosphothreonine is present on Thr341. Residue Ser347 is modified to Phosphoserine. Residues 349-368 (TPKNSYATTENKTLPRSSSM) show a composition bias toward polar residues. Thr361 is modified (phosphothreonine). Residues Ser367, Ser385, Ser396, and Ser455 each carry the phosphoserine modification. The SH3 domain maps to 375-438 (NGRMRVKAIF…PFSYTRVLDS (64 aa)). The tract at residues 445–486 (HMSLQQGKSSSTGNLLDKDDLALPPPDYGTSSRAFPSQTAGT) is disordered. 2 stretches are compositionally biased toward polar residues: residues 447-458 (SLQQGKSSSTGN) and 473-486 (GTSS…TAGT).

As to quaternary structure, homodimer. Interacts with CDC42 and RAC1 that have been activated by GTP binding. Binds TIAM1. Interacts with ATN1, ADGRB1, DIAPH1, EPS8, SHANK1, SHANK2, SHANK3, WASF1 and WASF2. Interacts with ENAH after recruitment of CDC42. Phosphorylated on tyrosine residues by INSR in response to insulin treatment. In terms of tissue distribution, ubiquitous.

Its subcellular location is the cytoplasm. It is found in the membrane. It localises to the cell projection. The protein resides in the filopodium. The protein localises to the ruffle. Its subcellular location is the cytoskeleton. Its function is as follows. Adapter protein that links membrane-bound small G-proteins to cytoplasmic effector proteins. Necessary for CDC42-mediated reorganization of the actin cytoskeleton and for RAC1-mediated membrane ruffling. Involved in the regulation of the actin cytoskeleton by WASF family members and the Arp2/3 complex. Plays a role in neurite growth. Acts syngeristically with ENAH to promote filipodia formation. Plays a role in the reorganization of the actin cytoskeleton in response to bacterial infection. Participates in actin bundling when associated with EPS8, promoting filopodial protrusions. This is BAR/IMD domain-containing adapter protein 2 (Baiap2) from Rattus norvegicus (Rat).